We begin with the raw amino-acid sequence, 205 residues long: Beta-crystallin B2 (205 aa).

Ala2 bears the N-acetylalanine mark. Residues 2–16 (ASDHQTQAGKPQPLN) form an N-terminal arm region. 2 consecutive Beta/gamma crystallin 'Greek key' domains span residues 17–56 (PKII…LVQA) and 57–101 (GPWV…RPIK). Positions 102–106 (VDSQE) are connecting peptide. Beta/gamma crystallin 'Greek key' domains lie at 107-148 (HKII…RVQS) and 149-191 (GTWV…RRIR). The tract at residues 193 to 205 (MQWHQRGAFHPSN) is C-terminal arm.

It belongs to the beta/gamma-crystallin family. In terms of assembly, homo/heterodimer, or complexes of higher-order. The structure of beta-crystallin oligomers seems to be stabilized through interactions between the N-terminal arms.

Crystallins are the dominant structural components of the vertebrate eye lens. In Canis lupus familiaris (Dog), this protein is Beta-crystallin B2 (CRYBB2).